The chain runs to 1125 residues: RGS domain-containing serine/threonine-protein kinase A (1125 aa).

Disordered stretches follow at residues 1–77, 96–191, 276–416, and 455–480; these read MKTS…GGNK, RRNS…IVDD, GISP…NNTN, and YVGG…PAPE. 2 stretches are compositionally biased toward low complexity: residues 7-30 and 37-66; these read SSNS…NNNN and SSKS…LSSG. Residues 121–136 show a composition bias toward basic and acidic residues; that stretch reads LDSKPPKPFDEKDDPI. 2 stretches are compositionally biased toward low complexity: residues 159 to 191 and 281 to 342; these read QPQQ…IVDD and NNNN…LNNS. Over residues 343 to 361 the composition is skewed to polar residues; that stretch reads PRYLNSSSSPRSMQHLSSK. The span at 362 to 416 shows a compositional bias: low complexity; sequence ITTTTTTTTTTTTTTSDDNNGNTNNNISNNNNIINNSNNNSNSNNNNNNNINNTN. One can recognise an RGS domain in the interval 487–603; sequence KFIETITDPT…ISSPFNPEWK (117 aa). The segment covering 617–685 has biased composition (low complexity); sequence TTTQPINNFN…NNSNGSNTSS (69 aa). Disordered stretches follow at residues 617–710 and 723–762; these read TTTQ…KERS and NLSN…SNNN. The span at 690–710 shows a compositional bias: basic and acidic residues; it reads ERLDNIKGNRERVDSNGKERS. The segment covering 723-735 has biased composition (low complexity); sequence NLSNHSNSSSNSN. Positions 736–748 are enriched in basic and acidic residues; it reads GKDKDKDKDKNEN. Low complexity predominate over residues 749 to 762; that stretch reads TTDNSNNNNNSNNN. In terms of domain architecture, Protein kinase spans 842–1097; the sequence is VSIHKWIASG…YLESIIYPSV (256 aa). ATP is bound by residues 848–856 and lysine 869; that span reads IASGSSGRV. The active-site Proton acceptor is aspartate 963.

This sequence belongs to the protein kinase superfamily. TKL Ser/Thr protein kinase family. Post-translationally, autophosphorylated.

The protein resides in the cytoplasm. The protein localises to the cell membrane. The catalysed reaction is L-seryl-[protein] + ATP = O-phospho-L-seryl-[protein] + ADP + H(+). It carries out the reaction L-threonyl-[protein] + ATP = O-phospho-L-threonyl-[protein] + ADP + H(+). With respect to regulation, up-regulated by cAMP. Serine/threonine kinase involved in negative regulation of chemotaxis. This is RGS domain-containing serine/threonine-protein kinase A (rckA) from Dictyostelium discoideum (Social amoeba).